Reading from the N-terminus, the 122-residue chain is uncharacterized protein (122 aa).

The signal sequence occupies residues 1-22 (MNMMRIFYIGLSGVGMMFSSMA).

This is an uncharacterized protein from Escherichia coli (strain K12).